The chain runs to 303 residues: Phosphate import ATP-binding protein PstB (303 aa).

Positions 56–298 constitute an ABC transporter domain; sequence LSTSDVHVYY…PDHQLTEAYI (243 aa). An ATP-binding site is contributed by 88 to 95; that stretch reads GPSGCGKS.

Belongs to the ABC transporter superfamily. Phosphate importer (TC 3.A.1.7) family. In terms of assembly, the complex is composed of two ATP-binding proteins (PstB), two transmembrane proteins (PstC and PstA) and a solute-binding protein (PstS).

The protein resides in the cell inner membrane. It carries out the reaction phosphate(out) + ATP + H2O = ADP + 2 phosphate(in) + H(+). Functionally, part of the ABC transporter complex PstSACB involved in phosphate import. Responsible for energy coupling to the transport system. This chain is Phosphate import ATP-binding protein PstB, found in Acinetobacter baylyi (strain ATCC 33305 / BD413 / ADP1).